Consider the following 1069-residue polypeptide: Degenerin-like protein del-10 (1069 aa).

Residues 1–95 (MVRMAERLAE…LNAASPVTRG (95 aa)) lie on the Cytoplasmic side of the membrane. A helical transmembrane segment spans residues 96–116 (LWCMIIIAFVILVLVQCYSQI). At 117 to 830 (KLYISEPVAT…FWSLACDIGG (714 aa)) the chain is on the extracellular side. Residues Asn-216, Asn-290, Asn-374, Asn-454, Asn-539, Asn-545, and Asn-584 are each glycosylated (N-linked (GlcNAc...) asparagine). Residues 831-851 (ALGLFLGASLLTIIEIVYLCI) form a helical membrane-spanning segment. The Cytoplasmic portion of the chain corresponds to 852–1069 (QYGLCGKRAR…EEDDDKHSYV (218 aa)). Disordered stretches follow at residues 898-948 (KKSQ…TLTP) and 960-1069 (RNSQ…HSYV). The segment covering 915–928 (GDKFRSRASSEESK) has biased composition (basic and acidic residues). Over residues 938 to 948 (NDPSGNSTLTP) the composition is skewed to polar residues. Over residues 967–978 (YHDDHHPEDHYY) the composition is skewed to basic and acidic residues.

Belongs to the amiloride-sensitive sodium channel (TC 1.A.6) family.

Its subcellular location is the membrane. The polypeptide is Degenerin-like protein del-10 (Caenorhabditis elegans).